The following is a 338-amino-acid chain: Extracellular globin (338 aa).

The first 18 residues, M1–A18, serve as a signal peptide directing secretion. N19 is a glycosylation site (N-linked (GlcNAc...) asparagine). Globin domains lie at C25–R167 and C174–K316. Residues Q82 and H114 each contribute to the heme b site. N216 is a glycosylation site (N-linked (GlcNAc...) asparagine). Positions 231 and 263 each coordinate heme b. Positions R313–H338 are disordered.

The protein belongs to the globin family. In terms of assembly, homooctamer.

The protein resides in the secreted. The protein localises to the extracellular space. In terms of biological role, has an extremely high oxygen affinity. In a vacuum, it takes several minutes to release its oxygen compared to milliseconds for a normal globin. Could be used as an oxygen scavenger for sterol biosynthesis. The chain is Extracellular globin from Ascaris suum (Pig roundworm).